The chain runs to 479 residues: Anaerobic nitric oxide reductase flavorubredoxin (479 aa).

Residues 30 to 210 (LRGSSYNSYL…PFSRLVTPKI (181 aa)) form a zinc metallo-hydrolase region. Residues histidine 79, glutamate 81, aspartate 83, histidine 147, aspartate 166, and histidine 227 each coordinate Fe cation. Residues 254-393 (ITIFYDTMSN…LCREHGREIA (140 aa)) enclose the Flavodoxin-like domain. FMN is bound by residues 260-264 (TMSNN) and 342-369 (AFGSHGWSGGAVDRLSTRLQDAGFEMSL). The 52-residue stretch at 423–474 (GPRMQCSVCQWIYDPAKGEPMQDVAPGTPWSEVPDNFLCPECSLGKDVFEEL) folds into the Rubredoxin-like domain. Fe cation is bound by residues cysteine 428, cysteine 431, cysteine 461, and cysteine 464.

In the N-terminal section; belongs to the zinc metallo-hydrolase group 3 family. In terms of assembly, homotetramer. Requires Fe cation as cofactor. FMN serves as cofactor.

It localises to the cytoplasm. The protein operates within nitrogen metabolism; nitric oxide reduction. In terms of biological role, anaerobic nitric oxide reductase; uses NADH to detoxify nitric oxide (NO), protecting several 4Fe-4S NO-sensitive enzymes. Has at least 2 reductase partners, only one of which (NorW, flavorubredoxin reductase) has been identified. NO probably binds to the di-iron center; electrons enter from the NorW at rubredoxin and are transferred sequentially to the FMN center and the di-iron center. Also able to function as an aerobic oxygen reductase. In Escherichia coli O139:H28 (strain E24377A / ETEC), this protein is Anaerobic nitric oxide reductase flavorubredoxin.